The chain runs to 380 residues: Alpha-N-acetylneuraminate alpha-2,8-sialyltransferase ST8SIA3 (380 aa).

Residues 1–17 (MRNCKMARVASVLGLVM) are Cytoplasmic-facing. A helical; Signal-anchor for type II membrane protein transmembrane segment spans residues 18-33 (LSVALLILSLISYVSL). Residues 34-380 (KKENIFTTPK…LTKLTLSHCA (347 aa)) lie on the Lumenal side of the membrane. N-linked (GlcNAc...) asparagine glycans are attached at residues Asn93 and Asn113. Cystine bridges form between Cys162–Cys313 and Cys176–Cys379. The CMP-N-acetyl-beta-neuraminate site is built by Asn167 and Asn190. The N-linked (GlcNAc...) asparagine glycan is linked to Asn206. Ser300, Thr301, Gly302, Trp322, Tyr336, and His337 together coordinate CMP-N-acetyl-beta-neuraminate. The active-site Proton donor/acceptor is His354.

This sequence belongs to the glycosyltransferase 29 family. Homodimer. In terms of tissue distribution, expressed in neurons in brain with higher expression in the striatum than in the hippocampus, cortex, and cerebellum (at protein level). Expressed in testes.

It is found in the golgi apparatus membrane. The catalysed reaction is a ganglioside GM3 (d18:1(4E)) + CMP-N-acetyl-beta-neuraminate = a ganglioside GD3 (d18:1(4E)) + CMP + H(+). The enzyme catalyses a ganglioside GM3 + CMP-N-acetyl-beta-neuraminate = a ganglioside GD3 + CMP + H(+). It carries out the reaction an N-acetyl-alpha-neuraminyl-(2-&gt;3)-beta-D-galactosyl derivative + CMP-N-acetyl-beta-neuraminate = an N-acetyl-alpha-neuraminyl-(2-&gt;8)-N-acetyl-alpha-neuraminyl-(2-&gt;3)-beta-D-galactosyl derivative + CMP + H(+). It catalyses the reaction an N-acetyl-alpha-neuraminyl-(2-&gt;3)-beta-D-galactosyl-(1-&gt;4)-N-acetyl-beta-D-glucosaminyl derivative + CMP-N-acetyl-beta-neuraminate = an alpha-Neu5Ac-(2-&gt;8)-alpha-Neu5Ac-(2-&gt;3)-beta-D-Gal-(1-&gt;4)-beta-D-GlcNAc derivative + CMP + H(+). Its pathway is protein modification; protein glycosylation. Functionally, catalyzes the transfer of sialic acid from a CMP-linked sialic acid donor onto a terminal alpha-2,3-, alpha-2,6-, or alpha-2,8-linked sialic acid of an acceptor, such as N-linked oligosaccharides of glycoproteins and glycolipids through alpha-2,8-linkages. Forms oligosialic and polysialic acid on various sialylated N-acetyllactosamine oligosaccharides of glycoproteins, including FETUB N-glycans, a2-HS-glycoprotein (AHSG) and alpha 2,3-sialylated glycosphingolipids, such as alpha 2,3-sialylparagloboside and ganglioside GM3 and to a lesser extent NCAM1 N-glycans. However, it is much more specific to N-linked oligosaccharides of glycoproteins than glycosphingolipids. 2,3-sialylparagloboside served as the best acceptor substrate among the glycolipids. alpha-Neu5Ac-(2-&gt;8)-alpha-Neu5Ac-(2-&gt;3)-beta-D-Gal-(1-&gt;4)-6S-D-GlcNAc and monosialyl and disialyl N-acetyllactosamines are the best acceptor substrates among glycoproteins. May play critical role in the striatum by mediating the formation of disialylated and trisialylated terminal glycotopes on N- and O-glycans of specific striatal proteins, regulating their distribution in lipid rafts, affecting their interaction with other binding partners, and subsequently modulating striatal functions. The polypeptide is Alpha-N-acetylneuraminate alpha-2,8-sialyltransferase ST8SIA3 (Mus musculus (Mouse)).